Reading from the N-terminus, the 402-residue chain is Enoyl-[acyl-carrier-protein] reductase [NADH] (402 aa).

Residues 48–53 (GASSGY), 74–75 (FE), 111–112 (DA), and 140–141 (LA) contribute to the NAD(+) site. Substrate is bound at residue Y226. Y236 (proton donor) is an active-site residue. NAD(+) is bound by residues K245 and 274 to 276 (VVT).

It belongs to the TER reductase family. In terms of assembly, monomer.

The catalysed reaction is a 2,3-saturated acyl-[ACP] + NAD(+) = a (2E)-enoyl-[ACP] + NADH + H(+). The enzyme catalyses a 2,3-saturated acyl-CoA + NAD(+) = a (2E)-enoyl-CoA + NADH + H(+). It functions in the pathway lipid metabolism; fatty acid biosynthesis. Its function is as follows. Involved in the final reduction of the elongation cycle of fatty acid synthesis (FAS II). Catalyzes the reduction of a carbon-carbon double bond in an enoyl moiety that is covalently linked to an acyl carrier protein (ACP). It can also use crotonyl-CoA. The protein is Enoyl-[acyl-carrier-protein] reductase [NADH] of Xanthomonas oryzae pv. oryzae (strain MAFF 311018).